A 421-amino-acid polypeptide reads, in one-letter code: Glutamyl-tRNA reductase (421 aa).

Residues 49 to 52 (TCNR), Ser109, 114 to 116 (EPQ), and Gln120 each bind substrate. Cys50 acts as the Nucleophile in catalysis. 189–194 (GLGQIG) provides a ligand contact to NADP(+).

The protein belongs to the glutamyl-tRNA reductase family. As to quaternary structure, homodimer.

It catalyses the reaction (S)-4-amino-5-oxopentanoate + tRNA(Glu) + NADP(+) = L-glutamyl-tRNA(Glu) + NADPH + H(+). The protein operates within porphyrin-containing compound metabolism; protoporphyrin-IX biosynthesis; 5-aminolevulinate from L-glutamyl-tRNA(Glu): step 1/2. In terms of biological role, catalyzes the NADPH-dependent reduction of glutamyl-tRNA(Glu) to glutamate 1-semialdehyde (GSA). In Limosilactobacillus reuteri (strain DSM 20016) (Lactobacillus reuteri), this protein is Glutamyl-tRNA reductase.